A 170-amino-acid polypeptide reads, in one-letter code: Tubulin polymerization-promoting protein family member 2 (170 aa).

Residues 127-170 (TGTHKERFDESGKGKGIAGREEMTDNTGYVSGYKGSGTYDKKTK) form a disordered region. Positions 129 to 149 (THKERFDESGKGKGIAGREEM) are enriched in basic and acidic residues.

This sequence belongs to the TPPP family. Expressed in spermatids. Detected in liver cancer (at protein level).

The protein resides in the cytoplasm. It is found in the cytosol. The protein localises to the cell projection. It localises to the cilium. Its subcellular location is the flagellum. Its function is as follows. Probable regulator of microtubule dynamics required for sperm motility. In contrast to other members of the family, has no microtubule bundling activity. The sequence is that of Tubulin polymerization-promoting protein family member 2 from Homo sapiens (Human).